The primary structure comprises 169 residues: Der GTPase-activating protein YihI (169 aa).

Disordered stretches follow at residues 1-99 and 146-169; these read MKPS…QAEL and SYDDDEEEEEDEKQEDMMRLLRGN. The segment covering 10–19 has biased composition (basic residues); sequence SKGHAKARRK. The segment covering 20–30 has biased composition (basic and acidic residues); sequence TREELDQEARD. Over residues 31–40 the composition is skewed to basic residues; it reads RKRQKKRRGH. The segment covering 49–58 has biased composition (polar residues); that stretch reads GNTTSGSKGQ. A compositionally biased stretch (acidic residues) spans 147 to 159; it reads YDDDEEEEEDEKQ. The segment covering 160–169 has biased composition (basic and acidic residues); that stretch reads EDMMRLLRGN.

It belongs to the YihI family. In terms of assembly, interacts with Der.

Its function is as follows. A GTPase-activating protein (GAP) that modifies Der/EngA GTPase function. May play a role in ribosome biogenesis. This Escherichia coli O45:K1 (strain S88 / ExPEC) protein is Der GTPase-activating protein YihI.